The chain runs to 383 residues: Meiotically up-regulated gene 93 protein (383 aa).

The TPR repeat unit spans residues 75–108 (KKVIWRRGLAYLRLGHPHLANRDWEHSLELDPNN).

It is found in the cytoplasm. The protein resides in the nucleus. Its function is as follows. Has a role in meiosis. The sequence is that of Meiotically up-regulated gene 93 protein (mug93) from Schizosaccharomyces pombe (strain 972 / ATCC 24843) (Fission yeast).